We begin with the raw amino-acid sequence, 444 residues long: uncharacterized protein (444 aa).

Residues 164-381 (GAYGKSFLLE…EKALKKEGIR (218 aa)) form the Radical SAM core domain. Residues C178, C182, and C185 each coordinate [4Fe-4S] cluster.

Requires [4Fe-4S] cluster as cofactor.

This is an uncharacterized protein from Methanocaldococcus jannaschii (strain ATCC 43067 / DSM 2661 / JAL-1 / JCM 10045 / NBRC 100440) (Methanococcus jannaschii).